We begin with the raw amino-acid sequence, 85 residues long: U4-theraphotoxin-Hhn1a (85 aa).

The first 22 residues, 1 to 22, serve as a signal peptide directing secretion; sequence MKVTLIAILTCAAVLVLHTTAA. A propeptide spanning residues 23 to 48 is cleaved from the precursor; it reads EELEAEGQLMEVGMPDTELAAVDEER. Intrachain disulfides connect Cys-52–Cys-66, Cys-56–Cys-77, and Cys-71–Cys-82.

It belongs to the neurotoxin 12 (Hwtx-2) family. 02 (Hwtx-2) subfamily. In terms of assembly, monomer. As to expression, expressed by the venom gland.

Its subcellular location is the secreted. Functionally, neurotoxin active on both insects and mammals. The sequence is that of U4-theraphotoxin-Hhn1a from Cyriopagopus hainanus (Chinese bird spider).